Here is a 197-residue protein sequence, read N- to C-terminus: Isopentenyl-diphosphate Delta-isomerase (197 aa).

Mn(2+) is bound by residues His41 and His48. The 138-residue stretch at 46 to 183 folds into the Nudix hydrolase domain; the sequence is RLHRAFSVFL…AWFMTVLDAA (138 aa). Residue Cys83 is part of the active site. Cys83 is a Mg(2+) binding site. His85 serves as a coordination point for Mn(2+). Residue Glu103 coordinates Mg(2+). Mn(2+)-binding residues include Glu130 and Glu132. The active site involves Glu132.

The protein belongs to the IPP isomerase type 1 family. The cofactor is Mg(2+). Mn(2+) serves as cofactor.

The protein localises to the cytoplasm. The enzyme catalyses isopentenyl diphosphate = dimethylallyl diphosphate. It functions in the pathway isoprenoid biosynthesis; dimethylallyl diphosphate biosynthesis; dimethylallyl diphosphate from isopentenyl diphosphate: step 1/1. Functionally, catalyzes the 1,3-allylic rearrangement of the homoallylic substrate isopentenyl (IPP) to its highly electrophilic allylic isomer, dimethylallyl diphosphate (DMAPP). The sequence is that of Isopentenyl-diphosphate Delta-isomerase from Streptomyces coelicolor (strain ATCC BAA-471 / A3(2) / M145).